The primary structure comprises 172 residues: Translation initiation factor IF-3 (172 aa).

The protein belongs to the IF-3 family. Monomer.

It is found in the cytoplasm. In terms of biological role, IF-3 binds to the 30S ribosomal subunit and shifts the equilibrium between 70S ribosomes and their 50S and 30S subunits in favor of the free subunits, thus enhancing the availability of 30S subunits on which protein synthesis initiation begins. The protein is Translation initiation factor IF-3 of Bartonella quintana (strain Toulouse) (Rochalimaea quintana).